The chain runs to 73 residues: Homeodomain-only protein (73 aa).

Positions 3–62 form a DNA-binding region, homeobox; degenerate; it reads TETASGPTEDQVEILEYNFNKVNKHPDPTTLCLIAAEAGLSEEETQKWFKQRLAQWRRSE.

Interacts with serum response factor (SRF). Component of a large complex containing histone deacetylases such as HDAC2. Interacts with the acetylated forms of HSPA1A and HSPA1B. Interacts with HSPA8.

It localises to the nucleus. Its subcellular location is the cytoplasm. Atypical homeodomain protein which does not bind DNA and is required to modulate cardiac growth and development. Acts via its interaction with SRF, thereby modulating the expression of SRF-dependent cardiac-specific genes and cardiac development. Prevents SRF-dependent transcription either by inhibiting SRF binding to DNA or by recruiting histone deacetylase (HDAC) proteins that prevent transcription by SRF. Overexpression causes cardiac hypertrophy. Acts as a co-chaperone for HSPA1A and HSPA1B chaperone proteins and assists in chaperone-mediated protein refolding. This chain is Homeodomain-only protein (HOPX), found in Bos taurus (Bovine).